We begin with the raw amino-acid sequence, 177 residues long: Large ribosomal subunit protein bL9 (177 aa).

The interval 151–177 (VEEEPAEEVEAPAETEVAEDAEEATEA) is disordered.

This sequence belongs to the bacterial ribosomal protein bL9 family.

Binds to the 23S rRNA. The protein is Large ribosomal subunit protein bL9 of Maridesulfovibrio salexigens (strain ATCC 14822 / DSM 2638 / NCIMB 8403 / VKM B-1763) (Desulfovibrio salexigens).